Reading from the N-terminus, the 411-residue chain is MAVIFRSISGCITSAESVLITQQSHEELYRVLRHNKQVSSTEQKVVVVSVSPQSRASLAAHYGIGSSEVARKLTSFLKHLGVHHVFDTAFSRSFSLIESQREFLQRFSQREADKKALPMLASACPGWICYAEKTHGEFILPYISTTRSPQQIMGSLVKGYFASQKGVSPQMIYHVTVMPCYDKKLEASRPDFYLSEHETREVDCVITSGEVLKMLEEEKVSLRDVQPAPLDTMFSNVCGEELLGHAGSGSGGYLHHIYKHAAKQLFGVDVDELTYKTMKNKDFQEVTLEKDGQVLLKFAAVYGFRNIQNLVQKLKRGKSPYHFVEVMACPSGCLNGGGQLKPSADQSNKELLQQVEEVYRSEHPSVPEDDSQVAELYQSWLESVGEEKARQLLHTQYHAVEKTANGLSIKW.

Positions 11, 124, 180, 329, and 333 each coordinate [4Fe-4S] cluster.

The protein belongs to the NARF family. In terms of assembly, component of the CIA complex.

Component of the cytosolic iron-sulfur protein assembly (CIA) complex, a multiprotein complex that mediates the incorporation of iron-sulfur cluster into extramitochondrial Fe/S proteins. The sequence is that of Cytosolic Fe-S cluster assembly factor narfl (narfl) from Danio rerio (Zebrafish).